The chain runs to 371 residues: Cytochrome b (371 aa).

4 consecutive transmembrane segments (helical) span residues 25 to 45, 69 to 90, 105 to 125, and 170 to 190; these read FGSM…FLAV, WLMQ…YIHI, WMSG…GYVL, and FFAL…LHII. Heme b contacts are provided by H75 and H89. Residues H174 and H188 each coordinate heme b. H193 contributes to the a ubiquinone binding site. The next 4 helical transmembrane spans lie at 218–238, 280–300, 312–332, and 339–358; these read YKDL…VSFF, LGGA…PLTH, LSQL…WAAT, and YIII…ISTP.

It belongs to the cytochrome b family. The cytochrome bc1 complex contains 3 respiratory subunits (MT-CYB, CYC1 and UQCRFS1), 2 core proteins (UQCRC1 and UQCRC2) and probably 6 low-molecular weight proteins. Heme b serves as cofactor.

It localises to the mitochondrion inner membrane. Its function is as follows. Component of the ubiquinol-cytochrome c reductase complex (complex III or cytochrome b-c1 complex) that is part of the mitochondrial respiratory chain. The b-c1 complex mediates electron transfer from ubiquinol to cytochrome c. Contributes to the generation of a proton gradient across the mitochondrial membrane that is then used for ATP synthesis. The chain is Cytochrome b (MT-CYB) from Python regius (Ball python).